The sequence spans 778 residues: Putative ATP-dependent RNA helicase MJ1505 (778 aa).

Positions I22 to H186 constitute a Helicase ATP-binding domain. L35 to T42 contacts ATP. The short motif at D137–H140 is the DEAH box element. In terms of domain architecture, Helicase C-terminal spans K338–K516.

Belongs to the DEAD box helicase family. DEAH subfamily.

It carries out the reaction ATP + H2O = ADP + phosphate + H(+). This chain is Putative ATP-dependent RNA helicase MJ1505, found in Methanocaldococcus jannaschii (strain ATCC 43067 / DSM 2661 / JAL-1 / JCM 10045 / NBRC 100440) (Methanococcus jannaschii).